A 297-amino-acid polypeptide reads, in one-letter code: Tyrosine recombinase XerD (297 aa).

In terms of domain architecture, Core-binding (CB) spans 1-86 (MKNLALIDLF…AMRKLFQYLY (86 aa)). The region spanning 107–291 (RLPKYLTEQQ…AKERLKRLHE (185 aa)) is the Tyr recombinase domain. Catalysis depends on residues arginine 147, lysine 171, histidine 243, arginine 246, and histidine 269. The active-site O-(3'-phospho-DNA)-tyrosine intermediate is the tyrosine 278.

The protein belongs to the 'phage' integrase family. XerD subfamily. Forms a cyclic heterotetrameric complex composed of two molecules of XerC and two molecules of XerD.

It localises to the cytoplasm. Its function is as follows. Site-specific tyrosine recombinase, which acts by catalyzing the cutting and rejoining of the recombining DNA molecules. The XerC-XerD complex is essential to convert dimers of the bacterial chromosome into monomers to permit their segregation at cell division. It also contributes to the segregational stability of plasmids. The sequence is that of Tyrosine recombinase XerD from Haemophilus influenzae (strain ATCC 51907 / DSM 11121 / KW20 / Rd).